Reading from the N-terminus, the 520-residue chain is Cytochrome P450 4F3 (520 aa).

A helical membrane pass occupies residues 11 to 31 (LWPMAASPWLLLLLVGASWLL). Heme is bound by residues Glu-328 and Cys-468.

It belongs to the cytochrome P450 family. Requires heme as cofactor. As to expression, selectively expressed in blood neutrophils and bone marrow cells. Coexpressed with CYP4F3B in prostate, ileum and trachea. In terms of tissue distribution, selectively expressed in liver and kidney. It is also the predominant CYP4F isoform in trachea and tissues of the gastrointestinal tract.

It is found in the endoplasmic reticulum membrane. The protein resides in the microsome membrane. The enzyme catalyses an organic molecule + reduced [NADPH--hemoprotein reductase] + O2 = an alcohol + oxidized [NADPH--hemoprotein reductase] + H2O + H(+). It carries out the reaction leukotriene B4 + reduced [NADPH--hemoprotein reductase] + O2 = 20-hydroxy-leukotriene B4 + oxidized [NADPH--hemoprotein reductase] + H2O + H(+). The catalysed reaction is 20-hydroxy-leukotriene B4 + reduced [NADPH--hemoprotein reductase] + O2 = 20-oxo-leukotriene B4 + oxidized [NADPH--hemoprotein reductase] + 2 H2O + H(+). It catalyses the reaction 20-oxo-leukotriene B4 + reduced [NADPH--hemoprotein reductase] + O2 = 20-carboxy-leukotriene B4 + oxidized [NADPH--hemoprotein reductase] + H2O + 2 H(+). The enzyme catalyses (5Z,8Z,11Z)-eicosatrienoate + reduced [NADPH--hemoprotein reductase] + O2 = 20-hydroxy-(5Z,8Z,11Z)-eicosatrienoate + oxidized [NADPH--hemoprotein reductase] + H2O + H(+). It carries out the reaction (5Z,8Z,11Z,14Z)-eicosatetraenoate + reduced [NADPH--hemoprotein reductase] + O2 = 20-hydroxy-(5Z,8Z,11Z,14Z)-eicosatetraenoate + oxidized [NADPH--hemoprotein reductase] + H2O + H(+). The catalysed reaction is (5Z,8Z,11Z,14Z,17Z)-eicosapentaenoate + reduced [NADPH--hemoprotein reductase] + O2 = 19-hydroxy-(5Z,8Z,11Z,14Z,17Z)-eicosapentaenoate + oxidized [NADPH--hemoprotein reductase] + H2O + H(+). It catalyses the reaction (5Z,8Z,11Z,14Z,17Z)-eicosapentaenoate + reduced [NADPH--hemoprotein reductase] + O2 = 20-hydroxy-(5Z,8Z,11Z,14Z,17Z)-eicosapentaenoate + oxidized [NADPH--hemoprotein reductase] + H2O + H(+). The enzyme catalyses (4Z,7Z,10Z,13Z,16Z,19Z)-docosahexaenoate + reduced [NADPH--hemoprotein reductase] + O2 = 21-hydroxy-(4Z,7Z,10Z,13Z,16Z,19Z)-docosahexaenoate + oxidized [NADPH--hemoprotein reductase] + H2O + H(+). It carries out the reaction (4Z,7Z,10Z,13Z,16Z,19Z)-docosahexaenoate + reduced [NADPH--hemoprotein reductase] + O2 = 22-hydroxy-(4Z,7Z,10Z,13Z,16Z,19Z)-docosahexaenoate + oxidized [NADPH--hemoprotein reductase] + H2O + H(+). The catalysed reaction is 8,9-epoxy-(5Z,11Z,14Z)-eicosatrienoate + reduced [NADPH--hemoprotein reductase] + O2 = 20-hydroxy-8,9-epoxy-(5Z,11Z,14Z)-eicosatrienoate + oxidized [NADPH--hemoprotein reductase] + H2O + H(+). It catalyses the reaction 11,12-epoxy-(5Z,8Z,14Z)-eicosatrienoate + reduced [NADPH--hemoprotein reductase] + O2 = 20-hydroxy-11,12-epoxy-(5Z,8Z,14Z)-eicosatrienoate + oxidized [NADPH--hemoprotein reductase] + H2O + H(+). The enzyme catalyses 14,15-epoxy-(5Z,8Z,11Z)-eicosatrienoate + reduced [NADPH--hemoprotein reductase] + O2 = 20-hydroxy-14,15-epoxy-(5Z,8Z,11Z)-eicosatrienoate + oxidized [NADPH--hemoprotein reductase] + H2O + H(+). It carries out the reaction 12,13-epoxy-(9Z)-octadecenoate + reduced [NADPH--hemoprotein reductase] + O2 = 18-hydroxy-12,13-epoxy-(9Z)-octadecenoate + oxidized [NADPH--hemoprotein reductase] + H2O + H(+). The catalysed reaction is 9,10-epoxy-(12Z)-octadecenoate + reduced [NADPH--hemoprotein reductase] + O2 = 18-hydroxy-9,10-epoxy-(12Z)-octadecenoate + oxidized [NADPH--hemoprotein reductase] + H2O + H(+). It catalyses the reaction 9,10-epoxyoctadecanoate + reduced [NADPH--hemoprotein reductase] + O2 = 18-hydroxy-9,10-epoxy-octadecanoate + oxidized [NADPH--hemoprotein reductase] + H2O + H(+). The enzyme catalyses (12R)-hydroxy-(9Z)-octadecenoate + reduced [NADPH--hemoprotein reductase] + O2 = (12R),18-dihydroxy-(9Z)-octadecenoate + oxidized [NADPH--hemoprotein reductase] + H2O + H(+). It carries out the reaction 12-hydroxyoctadecanoate + reduced [NADPH--hemoprotein reductase] + O2 = 12,18-dihydroxyoctadecanoate + oxidized [NADPH--hemoprotein reductase] + H2O + H(+). The catalysed reaction is 5-hydroxy-(6E,8Z,11Z,14Z)-eicosatetraenoate + reduced [NADPH--hemoprotein reductase] + O2 = 5,20-dihydroxy-(6E,8Z,11Z,14Z)-eicosatetraenoate + oxidized [NADPH--hemoprotein reductase] + H2O + H(+). It catalyses the reaction 8-hydroxy-(5Z,9E,11Z,14Z)-eicosatetraenoate + reduced [NADPH--hemoprotein reductase] + O2 = 8,20-dihydroxy-(5Z,9E,11Z,14Z)-eicosatetraenoate + oxidized [NADPH--hemoprotein reductase] + H2O + H(+). The enzyme catalyses 12-hydroxy-(5Z,8Z,10E,14Z)-eicosatetraenoate + reduced [NADPH--hemoprotein reductase] + O2 = 12,20-dihydroxy-(5Z,8Z,10E,14Z)-eicosatetraenoate + oxidized [NADPH--hemoprotein reductase] + H2O + H(+). It carries out the reaction 5-hydroxy-(6E,8Z,11Z,14Z,17Z)-eicosapentaenoate + reduced [NADPH--hemoprotein reductase] + O2 = 5,20-dihydroxy-(6E,8Z,11Z,14Z,17Z)-eicosapentaenoate + oxidized [NADPH--hemoprotein reductase] + H2O + H(+). The catalysed reaction is lipoxin A4 + reduced [NADPH--hemoprotein reductase] + O2 = 20-hydroxy-lipoxin A4 + oxidized [NADPH--hemoprotein reductase] + H2O + H(+). It catalyses the reaction lipoxin B4 + reduced [NADPH--hemoprotein reductase] + O2 = 20-hydroxy-lipoxin B4 + oxidized [NADPH--hemoprotein reductase] + H2O + H(+). The enzyme catalyses 22-hydroxydocosanoate + reduced [NADPH--hemoprotein reductase] + O2 = 22-oxodocosanoate + oxidized [NADPH--hemoprotein reductase] + 2 H2O + H(+). It carries out the reaction 22-oxodocosanoate + reduced [NADPH--hemoprotein reductase] + O2 = docosanedioate + oxidized [NADPH--hemoprotein reductase] + H2O + 2 H(+). The catalysed reaction is docosanoate + reduced [NADPH--hemoprotein reductase] + O2 = 22-hydroxydocosanoate + oxidized [NADPH--hemoprotein reductase] + H2O + H(+). It catalyses the reaction tetracosanoate + reduced [NADPH--hemoprotein reductase] + O2 = 24-hydroxytetracosanoate + oxidized [NADPH--hemoprotein reductase] + H2O + H(+). The enzyme catalyses hexacosanoate + reduced [NADPH--hemoprotein reductase] + O2 = 26-hydroxyhexacosanoate + oxidized [NADPH--hemoprotein reductase] + H2O + H(+). It carries out the reaction 26-hydroxyhexacosanoate + reduced [NADPH--hemoprotein reductase] + O2 = 26-oxohexacosanoate + oxidized [NADPH--hemoprotein reductase] + 2 H2O + H(+). The catalysed reaction is 26-oxohexacosanoate + reduced [NADPH--hemoprotein reductase] + O2 = hexacosanedioate + oxidized [NADPH--hemoprotein reductase] + H2O + 2 H(+). It catalyses the reaction 3-hydroxyoctadecanoate + reduced [NADPH--hemoprotein reductase] + O2 = 3,18-dihydroxyoctadecanoate + oxidized [NADPH--hemoprotein reductase] + H2O + H(+). The enzyme catalyses 3-hydroxyhexadecanoate + reduced [NADPH--hemoprotein reductase] + O2 = 3,16-dihydroxyhexadecanoate + oxidized [NADPH--hemoprotein reductase] + H2O + H(+). It functions in the pathway lipid metabolism; leukotriene B4 degradation. Its pathway is lipid metabolism; arachidonate metabolism. With respect to regulation, inhibited by carbon monoxide (CO). Its function is as follows. A cytochrome P450 monooxygenase involved in the metabolism of various endogenous substrates, including fatty acids and their oxygenated derivatives (oxylipins). Mechanistically, uses molecular oxygen inserting one oxygen atom into a substrate, and reducing the second into a water molecule, with two electrons provided by NADPH via cytochrome P450 reductase (CPR; NADPH-ferrihemoprotein reductase). May play a role in inactivation of pro-inflammatory and anti-inflammatory oxylipins during the resolution of inflammation. Functionally, catalyzes predominantly the oxidation of the terminal carbon (omega-oxidation) of oxylipins in myeloid cells, displaying higher affinity for arachidonate metabolite leukotriene B4 (LTB4). Inactivates LTB4 via three successive oxidative transformations to 20-hydroxy-LTB4, then to 20-oxo-LTB4 and to 20-carboxy-LTB4. Has omega-hydroxylase activity toward long-chain fatty acid epoxides with preference for 8,9-epoxy-(5Z,11Z,14Z)-eicosatrienoate (EET) and 9,10-epoxyoctadecanoate. Omega-hydroxylates monohydroxy polyunsaturated fatty acids (PUFAs), including hydroxyeicosatetraenoates (HETEs) and hydroxyeicosapentaenoates (HEPEs), to dihydroxy compounds. Contributes to the degradation of saturated very long-chain fatty acids (VLCFAs) such as docosanoic acid, by catalyzing successive omega-oxidations to the corresponding dicarboxylic acid, thereby initiating chain shortening. Has low hydroxylase activity toward PUFAs. Catalyzes predominantly the oxidation of the terminal carbon (omega-oxidation) of polyunsaturated fatty acids (PUFAs). Participates in the conversion of arachidonic acid to 20-hydroxyeicosatetraenoic acid (20-HETE), a signaling molecule acting both as vasoconstrictive and natriuretic with overall effect on arterial blood pressure. Has high omega-hydroxylase activity toward other PUFAs, including eicosatrienoic acid (ETA), eicosapentaenoic acid (EPA) and docosahexaenoic acid (DHA). Can also catalyze the oxidation of the penultimate carbon (omega-1 oxidation) of PUFAs with lower efficiency. Contributes to the degradation of saturated very long-chain fatty acids (VLCFAs) such as docosanoic acid and hexacosanoic acid, by catalyzing successive omega-oxidations to the corresponding dicarboxylic acids, thereby initiating chain shortening. Omega-hydroxylates long-chain 3-hydroxy fatty acids, likely initiating the oxidative conversion to the corresponding 3-hydroxydicarboxylic fatty acids. Has omega-hydroxylase activity toward long-chain fatty acid epoxides with preference for 8,9-epoxy-(5Z,11Z,14Z)-eicosatrienoate (EET) and 9,10-epoxyoctadecanoate. The polypeptide is Cytochrome P450 4F3 (Homo sapiens (Human)).